A 427-amino-acid chain; its full sequence is Phosphatidylserine decarboxylase proenzyme 1, mitochondrial (427 aa).

The N-terminal 77 residues, 1–77 (MRSYLRFSDR…RRFVYKLDQA (77 aa)), are a transit peptide targeting the mitochondrion. The Mitochondrial matrix segment spans residues 78-88 (VTAALGPNGRY). Residues 89–107 (IAMVGMTASAVLLTFHYKF) form a helical membrane-spanning segment. The Mitochondrial intermembrane portion of the chain corresponds to 108–427 (REVIAATDNV…TEDERLFAFY (320 aa)). Active-site charge relay system; for autoendoproteolytic cleavage activity residues include D210, H268, and S379. S379 functions as the Schiff-base intermediate with substrate; via pyruvic acid; for decarboxylase activity in the catalytic mechanism. At S379 the chain carries Pyruvic acid (Ser); by autocatalysis.

This sequence belongs to the phosphatidylserine decarboxylase family. PSD-B subfamily. Eukaryotic type I sub-subfamily. Heterodimer of a large membrane-associated beta subunit and a small pyruvoyl-containing alpha subunit. It depends on pyruvate as a cofactor. Post-translationally, is synthesized initially as an inactive proenzyme. Formation of the active enzyme involves a self-maturation process in which the active site pyruvoyl group is generated from an internal serine residue via an autocatalytic post-translational modification. Two non-identical subunits are generated from the proenzyme in this reaction, and the pyruvate is formed at the N-terminus of the alpha chain, which is derived from the carboxyl end of the proenzyme. The autoendoproteolytic cleavage occurs by a canonical serine protease mechanism, in which the side chain hydroxyl group of the serine supplies its oxygen atom to form the C-terminus of the beta chain, while the remainder of the serine residue undergoes an oxidative deamination to produce ammonia and the pyruvoyl prosthetic group on the alpha chain. During this reaction, the Ser that is part of the protease active site of the proenzyme becomes the pyruvoyl prosthetic group, which constitutes an essential element of the active site of the mature decarboxylase.

The protein resides in the mitochondrion. The protein localises to the mitochondrion inner membrane. The enzyme catalyses a 1,2-diacyl-sn-glycero-3-phospho-L-serine + H(+) = a 1,2-diacyl-sn-glycero-3-phosphoethanolamine + CO2. It participates in phospholipid metabolism; phosphatidylethanolamine biosynthesis; phosphatidylethanolamine from CDP-diacylglycerol: step 2/2. Functionally, catalyzes the formation of phosphatidylethanolamine (PtdEtn) from phosphatidylserine (PtdSer). Plays a central role in phospholipid metabolism and in the interorganelle trafficking of phosphatidylserine. The protein is Phosphatidylserine decarboxylase proenzyme 1, mitochondrial of Toxoplasma gondii (strain ATCC 50853 / GT1).